The sequence spans 729 residues: Fatty acid oxidation complex subunit alpha (729 aa).

The segment at 1–189 (MLYKGDTLYL…KIGLVDGVVK (189 aa)) is enoyl-CoA hydratase/isomerase. D296 provides a ligand contact to substrate. A 3-hydroxyacyl-CoA dehydrogenase region spans residues 311 to 729 (ETPKQAAVLG…ARPVGSLKTA (419 aa)). Residues M324, D343, 400–402 (VVE), K407, and S429 each bind NAD(+). H450 serves as the catalytic For 3-hydroxyacyl-CoA dehydrogenase activity. N453 provides a ligand contact to NAD(+). N500 and Y660 together coordinate substrate. Positions 708–729 (RHNEPYYPPVEPARPVGSLKTA) are disordered.

This sequence in the N-terminal section; belongs to the enoyl-CoA hydratase/isomerase family. It in the C-terminal section; belongs to the 3-hydroxyacyl-CoA dehydrogenase family. In terms of assembly, heterotetramer of two alpha chains (FadB) and two beta chains (FadA).

The catalysed reaction is a (3S)-3-hydroxyacyl-CoA + NAD(+) = a 3-oxoacyl-CoA + NADH + H(+). It catalyses the reaction a (3S)-3-hydroxyacyl-CoA = a (2E)-enoyl-CoA + H2O. It carries out the reaction a 4-saturated-(3S)-3-hydroxyacyl-CoA = a (3E)-enoyl-CoA + H2O. The enzyme catalyses (3S)-3-hydroxybutanoyl-CoA = (3R)-3-hydroxybutanoyl-CoA. The catalysed reaction is a (3Z)-enoyl-CoA = a 4-saturated (2E)-enoyl-CoA. It catalyses the reaction a (3E)-enoyl-CoA = a 4-saturated (2E)-enoyl-CoA. It participates in lipid metabolism; fatty acid beta-oxidation. Its function is as follows. Involved in the aerobic and anaerobic degradation of long-chain fatty acids via beta-oxidation cycle. Catalyzes the formation of 3-oxoacyl-CoA from enoyl-CoA via L-3-hydroxyacyl-CoA. It can also use D-3-hydroxyacyl-CoA and cis-3-enoyl-CoA as substrate. The protein is Fatty acid oxidation complex subunit alpha of Salmonella typhimurium (strain LT2 / SGSC1412 / ATCC 700720).